Here is a 224-residue protein sequence, read N- to C-terminus: Cytochrome c biogenesis ATP-binding export protein CcmA (224 aa).

The ABC transporter domain maps to 1–220 (MQNAEAAPAL…EYAHAEVVGA (220 aa)). 40–47 (GANGSGKT) provides a ligand contact to ATP.

It belongs to the ABC transporter superfamily. CcmA exporter (TC 3.A.1.107) family. As to quaternary structure, the complex is composed of two ATP-binding proteins (CcmA) and two transmembrane proteins (CcmB).

The protein localises to the cell inner membrane. It catalyses the reaction heme b(in) + ATP + H2O = heme b(out) + ADP + phosphate + H(+). Its function is as follows. Part of the ABC transporter complex CcmAB involved in the biogenesis of c-type cytochromes; once thought to export heme, this seems not to be the case, but its exact role is uncertain. Responsible for energy coupling to the transport system. The polypeptide is Cytochrome c biogenesis ATP-binding export protein CcmA (Bordetella bronchiseptica (strain ATCC BAA-588 / NCTC 13252 / RB50) (Alcaligenes bronchisepticus)).